The following is a 1683-amino-acid chain: Genome polyprotein (1683 aa).

Residues 1 to 445 are Extracellular-facing; the sequence is MRCIGISNRD…LHQVFGAIYG (445 aa). Cystine bridges form between C3-C30, C60-C121, C74-C105, and C92-C116. An N-linked (GlcNAc...) asparagine; by host glycan is attached at N67. The tract at residues 98–111 is fusion peptide; sequence DRGWGNGCGLFGKG. A glycan (N-linked (GlcNAc...) asparagine; by host) is linked at N153. 2 cysteine pairs are disulfide-bonded: C185-C285 and C302-C333. Residues 446-466 traverse the membrane as a helical segment; that stretch reads AAFSGVSWTMKILIGVIITWI. Over 467–472 the chain is Cytoplasmic; sequence GMNSRS. A helical transmembrane segment spans residues 473 to 493; the sequence is TSLSVSLVLVGIVTLYLGVMV. The Extracellular portion of the chain corresponds to 494 to 915; that stretch reads QADSGCVVSW…MVGATMTDDI (422 aa). Cystine bridges form between C499–C510, C550–C638, C674–C718, C775–C824, C786–C808, and C807–C811. N702 carries N-linked (GlcNAc...) asparagine; by host glycosylation. Residues 916-940 traverse the membrane as a helical segment; sequence GMGVTYLALLAAFRVRPTFAAGLLL. Over 941–946 the chain is Cytoplasmic; that stretch reads RKLTSK. The helical transmembrane segment at 947 to 965 threads the bilayer; the sequence is ELMMTTIGIVLLSQSSIPE. Residues 966-989 lie on the Lumenal side of the membrane; sequence TILELTDALALGMMVLKMVRNMEK. Residues 990–1010 traverse the membrane as a helical segment; sequence YQLAVTIMAILCVPNAVILQN. Position 1011 (A1011) is a topological domain, cytoplasmic. A helical transmembrane segment spans residues 1012 to 1030; sequence WKVSCTILAVVSVSPLLLT. Over 1031-1037 the chain is Lumenal; sequence SSQQKAD. The helical transmembrane segment at 1038–1058 threads the bilayer; sequence WIPLALTIKGLNPTAIFLTTL. The Cytoplasmic portion of the chain corresponds to 1059-1683; the sequence is SRTSKKRAGV…EFKEFAAGRK (625 aa). The 178-residue stretch at 1066-1243 folds into the Peptidase S7 domain; that stretch reads AGVLWDVPSP…EKSIEDNPEI (178 aa). Active-site charge relay system; for serine protease NS3 activity residues include H1116, D1140, and S1200. One can recognise a Helicase ATP-binding domain in the interval 1245–1401; it reads DDIFRKRRLT…QSNAPIMDEE (157 aa). Residues 1249–1252 are important for RNA-binding; that stretch reads RKRR. 1258 to 1265 serves as a coordination point for ATP; sequence LHPGAGKT. The DEAH box signature appears at 1349–1352; it reads DEAH. Residues 1411–1582 enclose the Helicase C-terminal domain; sequence SGHEWVTDFK…IFEPEREKVD (172 aa).

In terms of assembly, capsid protein C: Homodimer. Interacts (via N-terminus) with host EXOC1 (via C-terminus); this interaction results in EXOC1 degradation through the proteasome degradation pathway. Protein prM: Forms heterodimers with envelope protein E in the endoplasmic reticulum and Golgi. As to quaternary structure, homodimer; in the endoplasmic reticulum and Golgi. Interacts with protein prM. Interacts with non-structural protein 1. Homodimer; Homohexamer when secreted. Interacts with envelope protein E. In terms of assembly, interacts (via N-terminus) with serine protease NS3. Non-structural protein 2B: Forms a heterodimer with serine protease NS3. May form homooligomers. As to quaternary structure, forms a heterodimer with NS2B. Interacts with NS4B. Interacts with unphosphorylated RNA-directed RNA polymerase NS5; this interaction stimulates RNA-directed RNA polymerase NS5 guanylyltransferase activity. Interacts with host SHFL. Specific enzymatic cleavages in vivo yield mature proteins. Cleavages in the lumen of endoplasmic reticulum are performed by host signal peptidase, wereas cleavages in the cytoplasmic side are performed by the Serine protease NS3. Signal cleavage at the 2K-4B site requires a prior NS3 protease-mediated cleavage at the 4A-2K site. In terms of processing, N-glycosylated. The excreted form is glycosylated and this is required for efficient secretion of the protein from infected cells. Post-translationally, N-glycosylated. Specific enzymatic cleavages in vivo yield mature proteins. Cleavages in the lumen of endoplasmic reticulum are performed by host signal peptidase, wereas cleavages in the cytoplasmic side are performed by serine protease NS3. Signal cleavage at the 2K-4B site requires a prior NS3 protease-mediated cleavage at the 4A-2K site.

The protein localises to the virion membrane. It localises to the host endoplasmic reticulum membrane. Its subcellular location is the secreted. The enzyme catalyses Selective hydrolysis of -Xaa-Xaa-|-Yaa- bonds in which each of the Xaa can be either Arg or Lys and Yaa can be either Ser or Ala.. The catalysed reaction is a ribonucleoside 5'-triphosphate + H2O = a ribonucleoside 5'-diphosphate + phosphate + H(+). It carries out the reaction ATP + H2O = ADP + phosphate + H(+). Binds to host cell surface receptor and mediates fusion between viral and cellular membranes. Envelope protein is synthesized in the endoplasmic reticulum in the form of heterodimer with protein prM. They play a role in virion budding in the ER, and the newly formed immature particle is covered with 60 spikes composed of heterodimer between precursor prM and envelope protein E. The virion is transported to the Golgi apparatus where the low pH causes dissociation of PrM-E heterodimers and formation of E homodimers. prM-E cleavage is inefficient, and many virions are only partially matured. These uncleaved prM would play a role in immune evasion. Its function is as follows. Involved in immune evasion, pathogenesis and viral replication. Once cleaved off the polyprotein, is targeted to three destinations: the viral replication cycle, the plasma membrane and the extracellular compartment. Essential for viral replication. Required for formation of the replication complex and recruitment of other non-structural proteins to the ER-derived membrane structures. Excreted as a hexameric lipoparticle that plays a role against host immune response. Antagonizing the complement function. Binds to the host macrophages and dendritic cells. Inhibits signal transduction originating from Toll-like receptor 3 (TLR3). Functionally, disrupts the host endothelial glycocalyx layer of host pulmonary microvascular endothelial cells, inducing degradation of sialic acid and shedding of heparan sulfate proteoglycans. NS1 induces expression of sialidases, heparanase, and activates cathepsin L, which activates heparanase via enzymatic cleavage. These effects are probably linked to the endothelial hyperpermeability observed in severe dengue disease. In terms of biological role, component of the viral RNA replication complex that functions in virion assembly and antagonizes the host immune response. Serine protease subunit NS2B: Required cofactor for the serine protease function of NS3. May have membrane-destabilizing activity and form viroporins. Its function is as follows. Displays three enzymatic activities: serine protease, NTPase and RNA helicase. NS3 serine protease, in association with NS2B, performs its autocleavage and cleaves the polyprotein at dibasic sites in the cytoplasm: C-prM, NS2A-NS2B, NS2B-NS3, NS3-NS4A, NS4A-2K and NS4B-NS5. NS3 RNA helicase binds RNA and unwinds dsRNA in the 3' to 5' direction. The protein is Genome polyprotein of Aedimorphus (Red guenon).